We begin with the raw amino-acid sequence, 299 residues long: uncharacterized protein (299 aa).

The chain crosses the membrane as a helical span at residues 4 to 20; sequence LFFIFVMLIVLLCGCTS.

Its subcellular location is the membrane. This is an uncharacterized protein from Methanocaldococcus jannaschii (strain ATCC 43067 / DSM 2661 / JAL-1 / JCM 10045 / NBRC 100440) (Methanococcus jannaschii).